The chain runs to 306 residues: Beta-lactamase 1 (306 aa).

An N-terminal signal peptide occupies residues Met-1–Ala-27. Ser-91 (acyl-ester intermediate) is an active-site residue. Glu-187 (proton acceptor) is an active-site residue. Lys-253–Gly-255 provides a ligand contact to substrate.

The protein belongs to the class-A beta-lactamase family.

The catalysed reaction is a beta-lactam + H2O = a substituted beta-amino acid. In terms of biological role, this protein is a beta-lactamase with a substrate specificity for penicillins. The polypeptide is Beta-lactamase 1 (blaY) (Bacillus cereus).